Reading from the N-terminus, the 183-residue chain is Large ribosomal subunit protein eL18 (183 aa).

The segment at 151–183 is disordered; the sequence is HFGPAPGAPRSHTKPYVRSKGHEQAKPSRRSNV.

This sequence belongs to the eukaryotic ribosomal protein eL18 family.

It localises to the cytoplasm. The protein is Large ribosomal subunit protein eL18 (RpL18) of Plutella xylostella (Diamondback moth).